The following is a 579-amino-acid chain: Alpha-longipinene synthase (579 aa).

The Mg(2+) site is built by Asp-332, Asp-336, Asp-476, and Asn-484. The short motif at 332–336 is the DDXXD motif element; the sequence is DDLYD.

This sequence belongs to the terpene synthase family. Tpsd subfamily. Mg(2+) is required as a cofactor. It depends on Mn(2+) as a cofactor.

It carries out the reaction (2E,6E)-farnesyl diphosphate = alpha-longipinene + diphosphate. It functions in the pathway sesquiterpene biosynthesis. It participates in terpene metabolism; oleoresin biosynthesis. Its function is as follows. Terpene synthase (TPS) involved in the biosynthesis of sesquiterpene natural products included in conifer oleoresin secretions and volatile emissions; these compounds contribute to biotic and abiotic stress defense against herbivores and pathogens. Catalyzes the conversion of (2E,6E)-farnesyl diphosphate (FPP) to alpha-longipinene. In Picea sitchensis (Sitka spruce), this protein is Alpha-longipinene synthase.